Reading from the N-terminus, the 145-residue chain is Protein SprT-like (145 aa).

The region spanning 4-140 (TNYVQEVSLA…VCGNCHGKLM (137 aa)) is the SprT-like domain. H64 is a binding site for Zn(2+). E65 is an active-site residue. A Zn(2+)-binding site is contributed by H68.

The protein belongs to the SprT family. Requires Zn(2+) as cofactor.

The protein resides in the cytoplasm. This is Protein SprT-like from Streptococcus pyogenes serotype M1.